The following is a 543-amino-acid chain: DM7 family protein GG19680 (543 aa).

The span at 415 to 430 shows a compositional bias: basic and acidic residues; that stretch reads GETQEMDEAHPTKEES. Positions 415–443 are disordered; that stretch reads GETQEMDEAHPTKEESKSEEEGEVQSGSQ.

Belongs to the DM7 family.

In Drosophila erecta (Fruit fly), this protein is DM7 family protein GG19680.